Here is a 131-residue protein sequence, read N- to C-terminus: Small ribosomal subunit protein uS8 (131 aa).

This sequence belongs to the universal ribosomal protein uS8 family. In terms of assembly, part of the 30S ribosomal subunit. Contacts proteins S5 and S12.

Functionally, one of the primary rRNA binding proteins, it binds directly to 16S rRNA central domain where it helps coordinate assembly of the platform of the 30S subunit. This is Small ribosomal subunit protein uS8 from Campylobacter fetus subsp. fetus (strain 82-40).